A 350-amino-acid polypeptide reads, in one-letter code: Phenylalanine--tRNA ligase alpha subunit (350 aa).

Residue Glu-271 coordinates Mg(2+).

The protein belongs to the class-II aminoacyl-tRNA synthetase family. Phe-tRNA synthetase alpha subunit type 1 subfamily. Tetramer of two alpha and two beta subunits. Mg(2+) serves as cofactor.

It localises to the cytoplasm. It carries out the reaction tRNA(Phe) + L-phenylalanine + ATP = L-phenylalanyl-tRNA(Phe) + AMP + diphosphate + H(+). The sequence is that of Phenylalanine--tRNA ligase alpha subunit from Paracidovorax citrulli (strain AAC00-1) (Acidovorax citrulli).